We begin with the raw amino-acid sequence, 744 residues long: Cell division cycle protein 27 homolog B (744 aa).

The TPR 1 repeat unit spans residues 101-134 (AAGHYLLGLIYKYTDRRKNAAQQFKQSLTIDPLL). Polar residues predominate over residues 180 to 199 (NEERNSTSTKNTSSEDYSPR). Disordered stretches follow at residues 180-218 (NEERNSTSTKNTSSEDYSPRQSKHTQSHGLKDISGNFHS) and 359-390 (ENMDEGVRGEPFDDSRPNTASTTGSMASNDQE). The span at 363–374 (EGVRGEPFDDSR) shows a compositional bias: basic and acidic residues. The span at 375–387 (PNTASTTGSMASN) shows a compositional bias: polar residues. TPR repeat units lie at residues 450–483 (GWVLSQVGKAYFELIDYLEAEKAFRLARLASPYC), 518–551 (PQSWCAMGNCYSLQKDHETALKNFLRAVQLNPRF), 553–585 (YAHTLCGHEYTTLEDFENGMKSYQNALRVDTRH), 587–619 (NAWYGLGMIYLRQEKLEFSEHHFRMAFLINPSS), 621–653 (VIMSYLGTSLHALKRSEEALEIMEQAIVADRKN), 655–687 (LPMYQKANILVCLERLDEALEVLEELKEYAPSE), and 688–721 (SSVYALMGRIYKRRNMHDKAMLHFGLALDMKPPA).

This sequence belongs to the APC3/CDC27 family. As to quaternary structure, the APC/C is composed of at least 10 subunits. Can homodimerize. Interacts with APC2, APC10, FZR2 and FZR3. Interacts with PANS1. Interacts with SAMBA. Specifically expressed in dividing and elongating cells.

It is found in the nucleus. Its pathway is protein modification; protein ubiquitination. Functionally, component of the anaphase promoting complex/cyclosome (APC/C), a cell cycle-regulated E3 ubiquitin-protein ligase complex that controls progression through mitosis and the G1 phase of the cell cycle. The APC/C complex controls several key steps in the cell cycle by mediating ubiquitination and subsequent degradation of target proteins such as cyclins. The APC/C complex is required for the female gametophyte development and is involved in several aspect of development by controlling cell division and cell elongation. Involved in the control of endoreduplication. Functionally redundant with CDC27A in the control of gametophyte development. The polypeptide is Cell division cycle protein 27 homolog B (CDC27B) (Arabidopsis thaliana (Mouse-ear cress)).